The chain runs to 368 residues: 1-deoxy-D-xylulose 5-phosphate reductoisomerase (368 aa).

NADPH-binding residues include Thr-7, Gly-8, Ser-9, Ile-10, Gly-31, Lys-32, Asn-33, and Asn-113. A 1-deoxy-D-xylulose 5-phosphate-binding site is contributed by Lys-114. Glu-115 is an NADPH binding site. Residue Asp-133 coordinates Mn(2+). Ser-134, Glu-135, Ser-158, and His-181 together coordinate 1-deoxy-D-xylulose 5-phosphate. Residue Glu-135 participates in Mn(2+) binding. Gly-187 lines the NADPH pocket. 4 residues coordinate 1-deoxy-D-xylulose 5-phosphate: Ser-194, Asn-199, Lys-200, and Glu-203. Glu-203 is a binding site for Mn(2+).

Belongs to the DXR family. Mg(2+) serves as cofactor. It depends on Mn(2+) as a cofactor.

It carries out the reaction 2-C-methyl-D-erythritol 4-phosphate + NADP(+) = 1-deoxy-D-xylulose 5-phosphate + NADPH + H(+). Its pathway is isoprenoid biosynthesis; isopentenyl diphosphate biosynthesis via DXP pathway; isopentenyl diphosphate from 1-deoxy-D-xylulose 5-phosphate: step 1/6. In terms of biological role, catalyzes the NADPH-dependent rearrangement and reduction of 1-deoxy-D-xylulose-5-phosphate (DXP) to 2-C-methyl-D-erythritol 4-phosphate (MEP). The chain is 1-deoxy-D-xylulose 5-phosphate reductoisomerase from Helicobacter pylori (strain ATCC 700392 / 26695) (Campylobacter pylori).